Reading from the N-terminus, the 309-residue chain is Glutaminase (309 aa).

Residues S64, N114, E160, N167, Y191, Y243, and V261 each coordinate substrate.

The protein belongs to the glutaminase family. As to quaternary structure, homotetramer.

It carries out the reaction L-glutamine + H2O = L-glutamate + NH4(+). This chain is Glutaminase, found in Rhizobium johnstonii (strain DSM 114642 / LMG 32736 / 3841) (Rhizobium leguminosarum bv. viciae).